We begin with the raw amino-acid sequence, 2048 residues long: Fanconi anemia group M protein (2048 aa).

Positions 1–37 (MSGRQRTLFQTWGSSISRSSGTPGCSSGTERPQSPGS) are enriched in polar residues. The disordered stretch occupies residues 1–45 (MSGRQRTLFQTWGSSISRSSGTPGCSSGTERPQSPGSSKAPLPAA). Residue Ser34 is modified to Phosphoserine. The Helicase ATP-binding domain maps to 98–266 (ISRAALFCNT…QVITNLLIGQ (169 aa)). 111-118 (LPTGLGKT) serves as a coordination point for ATP. A DEAH box motif is present at residues 214–217 (DEAH). One can recognise a Helicase C-terminal domain in the interval 452 to 627 (KLEEVVIEHF…VLHFYQRSPR (176 aa)). The interaction with CENPS/CENPSX stretch occupies residues 661-800 (SIFSYRDGMR…TSTFIAPRNE (140 aa)). Disordered stretches follow at residues 1433-1476 (NVLN…NFPK), 1518-1540 (LSEEDAEYVSSDENDESENEQDS), and 1668-1809 (ILPD…HTSL). Over residues 1518–1538 (LSEEDAEYVSSDENDESENEQ) the composition is skewed to acidic residues. Phosphoserine is present on residues Ser1673 and Ser1674. Polar residues-rich tracts occupy residues 1703–1745 (HCLN…ISEV), 1753–1767 (HNEVQSTTPPFTTVD), and 1786–1797 (EDSSTSGASCSK). Residues 1727–2048 (LAKQSKQTSL…LNQDRLKSDI (322 aa)) are interaction with FAAP24.

The protein belongs to the DEAD box helicase family. DEAH subfamily. FANCM sub-subfamily. As to quaternary structure, component of the Fanconi anemia (FA) core complex, which consists of CENPS, CENPX, FANCA, FANCB, FANCC, FANCE, FANCF, FANCG, FANCL, FANCM, FAAP24 and FAAP100. The FA core complex associates with Bloom syndrome (BLM) complex, which consists of at least BLM, DNA topoisomerase 3-alpha/TOP3A, RMI1/BLAP75, RPA1/RPA70 and RPA2/RPA32. This supercomplex between FA and BLM complexes has been called BRAFT. Forms a discrete complex with CENPS and CENPX, called FANCM-MHF; this interaction stimulates DNA binding and replication fork remodeling by FANCM and stabilizes the binding partners. Forms a heterodimer with FAAP24; this interaction increases FANCM single-stranded DNA-binding activity. Phosphorylated; hyperphosphorylated in response to genotoxic stress. In terms of tissue distribution, expressed in germ cells of fetal and adult ovaries. In fetal ovaries, it is present in oogonia but expression is stronger in pachytene stage oocytes. Expressed in oocytes arrested at the diplotene stage of prophase I during the last trimester of pregnancy and in adults. Expressed in the testis.

The protein resides in the nucleus. It catalyses the reaction ATP + H2O = ADP + phosphate + H(+). In terms of biological role, DNA-dependent ATPase component of the Fanconi anemia (FA) core complex. Required for the normal activation of the FA pathway, leading to monoubiquitination of the FANCI-FANCD2 complex in response to DNA damage, cellular resistance to DNA cross-linking drugs, and prevention of chromosomal breakage. In complex with CENPS and CENPX, binds double-stranded DNA (dsDNA), fork-structured DNA (fsDNA) and Holliday junction substrates. Its ATP-dependent DNA branch migration activity can process branched DNA structures such as a movable replication fork. This activity is strongly stimulated in the presence of CENPS and CENPX. In complex with FAAP24, efficiently binds to single-strand DNA (ssDNA), splayed-arm DNA, and 3'-flap substrates. In vitro, on its own, strongly binds ssDNA oligomers and weakly fsDNA, but does not bind to dsDNA. The polypeptide is Fanconi anemia group M protein (FANCM) (Homo sapiens (Human)).